We begin with the raw amino-acid sequence, 137 residues long: Kunitz-type trypsin inhibitor alpha chain (137 aa).

An intrachain disulfide couples Cys-40 to Cys-86.

Belongs to the protease inhibitor I3 (leguminous Kunitz-type inhibitor) family. In terms of assembly, heterodimer of an alpha and a beta chain linked by a disulfide bond.

In terms of biological role, inhibition of trypsin. This Neltuma juliflora (Mesquite) protein is Kunitz-type trypsin inhibitor alpha chain.